The primary structure comprises 109 residues: Non-structural protein ORF4a (109 aa).

Interacts with host PRKRA/PACT.

The protein localises to the host cytoplasm. Functionally, dsRNA-binding protein that plays a role in the inhibition of host innate response. Suppresses host PACT-induced activation of RIGI and MDA5 and thereby circumvents the production of type I interferons. Also prevents the activation of host NF-kappa-B. Inhibits the integrated stress response (ISR) in the infected cell by binding to dsRNA and inhibiting EIF2AK2-mediated phosphorylation of EIF2S1/eIF2-alpha. Stress granule formation is thus inhibited, which allows protein synthesis and viral replication. This is Non-structural protein ORF4a (ORF4a) from Middle East respiratory syndrome-related coronavirus (isolate United Kingdom/H123990006/2012) (MERS-CoV).